A 3625-amino-acid polypeptide reads, in one-letter code: Spectinabilin polyketide synthase system protein NorA' (3625 aa).

The Ketosynthase family 3 (KS3) 1 domain occupies 33–459; the sequence is REPVAVVSMA…GTNAHVILEQ (427 aa). Residues Cys-206, His-341, and His-381 each act as for beta-ketoacyl synthase 1 activity in the active site. Residues 564–881 form the Malonyl-CoA:ACP transacylase (MAT) 1 domain; the sequence is LVFPGQGSQW…SLGELFAGGR (318 aa). The interval 930-1054 is N-terminal hotdog fold 1; sequence HPWWGAVTEL…GTLTRTARPA (125 aa). In terms of domain architecture, PKS/mFAS DH 1 spans 930–1200; the sequence is HPWWGAVTEL…VRPLTPGSGA (271 aa). The Proton acceptor; for dehydratase activity 1 role is filled by His-962. Positions 1066 to 1200 are C-terminal hotdog fold 1; sequence ADPLPVDRIY…VRPLTPGSGA (135 aa). The active-site Proton donor; for dehydratase activity 1 is Asp-1125. Residues 1443 to 1620 form the Ketoreductase (KR) 1 domain; that stretch reads GTVLVTGAAG…LSLAWGLWAE (178 aa). A Carrier 1 domain is found at 1722–1797; that stretch reads GAVLETVRAQ…SLAAHLLGRL (76 aa). Ser-1757 carries the O-(pantetheine 4'-phosphoryl)serine modification. The Ketosynthase family 3 (KS3) 2 domain occupies 1815–2231; sequence DEPIAIIGMA…GTNAHVVLEQ (417 aa). Catalysis depends on for beta-ketoacyl synthase 2 activity residues Cys-1978, His-2113, and His-2153. The 321-residue stretch at 2336-2656 folds into the Malonyl-CoA:ACP transacylase (MAT) 2 domain; sequence VFVFPGQGAQ…VAEAHTRGIA (321 aa). An N-terminal hotdog fold 2 region spans residues 2704-2829; sequence HPLLGARMEL…GLLSEEEPAT (126 aa). One can recognise a PKS/mFAS DH 2 domain in the interval 2704-2981; that stretch reads HPLLGARMEL…ARPVPAGQLR (278 aa). The Proton acceptor; for dehydratase activity 2 role is filled by His-2736. Residues 2842-2981 form a C-terminal hotdog fold 2 region; the sequence is AEPIELVGFY…ARPVPAGQLR (140 aa). The active-site Proton donor; for dehydratase activity 2 is Asp-2903. One can recognise a Ketoreductase (KR) 2 domain in the interval 3182 to 3361; the sequence is GTVLITGASG…QSLAWGLWSE (180 aa). A Carrier 2 domain is found at 3462-3537; that stretch reads RQLTDLVRAQ…ALAGHLSTRL (76 aa). Ser-3497 carries the O-(pantetheine 4'-phosphoryl)serine modification.

In terms of assembly, the spectinabilin polyketide synthase complex is composed of 4 proteins, NorA, NorA', NorB and NorC. The complex comprises 6 modules with a total of 28 catalytic domains catalyzing 7 chain elongations. NorA comprises one module, NorA' two modules, NorB one module and NorC two modules. The cofactor is pantetheine 4'-phosphate.

It catalyses the reaction 4-nitrobenzoyl-CoA + 6 (S)-methylmalonyl-CoA + malonyl-CoA + 6 NADPH + 12 H(+) = demethyldeoxyspectinabilin + 7 CO2 + 6 NADP(+) + 8 CoA + 5 H2O. It participates in antibiotic biosynthesis. The protein operates within polyketide biosynthesis. In terms of biological role, component of a type I modular polyketide synthase (PKS) that generates the backbone of the antibiotic spectinabilin (also known as neoaureothin), a nitroaryl-substituted polyketide metabolite. This PKS system accepts the unusual starter unit 4-nitrobenzoyl-CoA and extends it by 6 molecules of (S)-methylmalonyl-CoA and a single molecule of malonyl-CoA. This chain is Spectinabilin polyketide synthase system protein NorA', found in Streptomyces orinoci (Streptoverticillium orinoci).